We begin with the raw amino-acid sequence, 441 residues long: Ribulose bisphosphate carboxylase large chain (441 aa).

Lys-5 bears the N6,N6,N6-trimethyllysine mark. Substrate contacts are provided by Asn-114 and Thr-164. Lys-166 serves as the catalytic Proton acceptor. A substrate-binding site is contributed by Lys-168. Lys-192, Asp-194, and Glu-195 together coordinate Mg(2+). The residue at position 192 (Lys-192) is an N6-carboxylysine. His-285 acts as the Proton acceptor in catalysis. Substrate contacts are provided by Arg-286, His-318, and Ser-370.

The protein belongs to the RuBisCO large chain family. Type I subfamily. In terms of assembly, heterohexadecamer of 8 large chains and 8 small chains; disulfide-linked. The disulfide link is formed within the large subunit homodimers. Requires Mg(2+) as cofactor. The disulfide bond which can form in the large chain dimeric partners within the hexadecamer appears to be associated with oxidative stress and protein turnover.

The protein localises to the plastid. Its subcellular location is the chloroplast. The enzyme catalyses 2 (2R)-3-phosphoglycerate + 2 H(+) = D-ribulose 1,5-bisphosphate + CO2 + H2O. It carries out the reaction D-ribulose 1,5-bisphosphate + O2 = 2-phosphoglycolate + (2R)-3-phosphoglycerate + 2 H(+). RuBisCO catalyzes two reactions: the carboxylation of D-ribulose 1,5-bisphosphate, the primary event in carbon dioxide fixation, as well as the oxidative fragmentation of the pentose substrate in the photorespiration process. Both reactions occur simultaneously and in competition at the same active site. The chain is Ribulose bisphosphate carboxylase large chain from Glycyrrhiza echinata (Licorice).